A 191-amino-acid polypeptide reads, in one-letter code: 3-isopropylmalate dehydratase small subunit (191 aa).

This sequence belongs to the LeuD family. LeuD type 1 subfamily. Heterodimer of LeuC and LeuD.

It carries out the reaction (2R,3S)-3-isopropylmalate = (2S)-2-isopropylmalate. It functions in the pathway amino-acid biosynthesis; L-leucine biosynthesis; L-leucine from 3-methyl-2-oxobutanoate: step 2/4. Catalyzes the isomerization between 2-isopropylmalate and 3-isopropylmalate, via the formation of 2-isopropylmaleate. This chain is 3-isopropylmalate dehydratase small subunit, found in Staphylococcus saprophyticus subsp. saprophyticus (strain ATCC 15305 / DSM 20229 / NCIMB 8711 / NCTC 7292 / S-41).